The following is a 133-amino-acid chain: Large ribosomal subunit protein uL22 (133 aa).

The protein belongs to the universal ribosomal protein uL22 family. Part of the 50S ribosomal subunit.

Its function is as follows. This protein binds specifically to 23S rRNA; its binding is stimulated by other ribosomal proteins, e.g. L4, L17, and L20. It is important during the early stages of 50S assembly. It makes multiple contacts with different domains of the 23S rRNA in the assembled 50S subunit and ribosome. In terms of biological role, the globular domain of the protein is located near the polypeptide exit tunnel on the outside of the subunit, while an extended beta-hairpin is found that lines the wall of the exit tunnel in the center of the 70S ribosome. In Aquifex pyrophilus, this protein is Large ribosomal subunit protein uL22.